A 470-amino-acid chain; its full sequence is Argininosuccinate lyase (470 aa).

This sequence belongs to the lyase 1 family. Argininosuccinate lyase subfamily.

It localises to the cytoplasm. The catalysed reaction is 2-(N(omega)-L-arginino)succinate = fumarate + L-arginine. The protein operates within amino-acid biosynthesis; L-arginine biosynthesis; L-arginine from L-ornithine and carbamoyl phosphate: step 3/3. The polypeptide is Argininosuccinate lyase (Mycobacterium sp. (strain JLS)).